Consider the following 462-residue polypeptide: Chromosomal replication initiator protein DnaA (462 aa).

The interval 1–86 is domain I, interacts with DnaA modulators; sequence MSLSLWQQCL…EVGNKPVSQN (86 aa). Residues 86–125 form a domain II region; it reads NDSPPQRVVTHTPVAPAPQNTSVRPSWDNTAVQPELSYRS. The segment at 126 to 342 is domain III, AAA+ region; that stretch reads NVNPKHTFDN…GALNRVIANA (217 aa). ATP is bound by residues Gly-170, Gly-172, Lys-173, and Thr-174. The domain IV, binds dsDNA stretch occupies residues 343–462; that stretch reads NFTGRAITID…FSNLIRTLSS (120 aa).

This sequence belongs to the DnaA family. As to quaternary structure, oligomerizes as a right-handed, spiral filament on DNA at oriC.

The protein resides in the cytoplasm. In terms of biological role, plays an essential role in the initiation and regulation of chromosomal replication. ATP-DnaA binds to the origin of replication (oriC) to initiate formation of the DNA replication initiation complex once per cell cycle. Binds the DnaA box (a 9 base pair repeat at the origin) and separates the double-stranded (ds)DNA. Forms a right-handed helical filament on oriC DNA; dsDNA binds to the exterior of the filament while single-stranded (ss)DNA is stabiized in the filament's interior. The ATP-DnaA-oriC complex binds and stabilizes one strand of the AT-rich DNA unwinding element (DUE), permitting loading of DNA polymerase. After initiation quickly degrades to an ADP-DnaA complex that is not apt for DNA replication. Binds acidic phospholipids. The chain is Chromosomal replication initiator protein DnaA from Photorhabdus laumondii subsp. laumondii (strain DSM 15139 / CIP 105565 / TT01) (Photorhabdus luminescens subsp. laumondii).